A 552-amino-acid chain; its full sequence is Carboxypeptidase Y homolog A (552 aa).

The signal sequence occupies residues 1-18 (MRIATSTLLVGAASAAFA). Residues 19-133 (PQDGTQRVLN…KLDNYNLRAR (115 aa)) constitute a propeptide that is removed on maturation. 5 cysteine pairs are disulfide-bonded: cysteine 187-cysteine 427, cysteine 321-cysteine 335, cysteine 345-cysteine 368, cysteine 352-cysteine 361, and cysteine 390-cysteine 397. N-linked (GlcNAc...) asparagine glycosylation occurs at asparagine 218. Residue serine 274 is part of the active site. The active site involves aspartate 466. Asparagine 516 carries N-linked (GlcNAc...) asparagine glycosylation. Histidine 527 is a catalytic residue.

This sequence belongs to the peptidase S10 family.

It localises to the vacuole. It carries out the reaction Release of a C-terminal amino acid with broad specificity.. In terms of biological role, vacuolar carboxypeptidase involved in degradation of small peptides. Digests preferentially peptides containing an aliphatic or hydrophobic residue in P1' position, as well as methionine, leucine or phenylalanine in P1 position of ester substrate. The protein is Carboxypeptidase Y homolog A (CPYA) of Pyricularia oryzae (strain 70-15 / ATCC MYA-4617 / FGSC 8958) (Rice blast fungus).